A 360-amino-acid polypeptide reads, in one-letter code: Tubulin-like protein CetZ2 (360 aa).

GTP is bound by residues 10–14 (QAGGK), 65–66 (GG), 106–108 (GSG), Glu-138, Asn-165, and Asn-183. Over residues 334 to 354 (EAIDKAETEPREDPKGMWHSD) the composition is skewed to basic and acidic residues. The segment at 334 to 360 (EAIDKAETEPREDPKGMWHSDDLDDLL) is disordered.

Belongs to the CetZ family.

The protein localises to the cytoplasm. Functionally, involved in cell shape control. The polypeptide is Tubulin-like protein CetZ2 (Haloferax volcanii (strain ATCC 29605 / DSM 3757 / JCM 8879 / NBRC 14742 / NCIMB 2012 / VKM B-1768 / DS2) (Halobacterium volcanii)).